The following is a 215-amino-acid chain: Ribosomal RNA small subunit methyltransferase G (215 aa).

Residues G78, L83, 128-129 (AE), and R146 each bind S-adenosyl-L-methionine.

The protein belongs to the methyltransferase superfamily. RNA methyltransferase RsmG family.

It is found in the cytoplasm. It carries out the reaction guanosine(527) in 16S rRNA + S-adenosyl-L-methionine = N(7)-methylguanosine(527) in 16S rRNA + S-adenosyl-L-homocysteine. Specifically methylates the N7 position of guanine in position 527 of 16S rRNA. The protein is Ribosomal RNA small subunit methyltransferase G of Anaeromyxobacter dehalogenans (strain 2CP-C).